The following is an 82-amino-acid chain: Small ribosomal subunit protein bS20 (82 aa).

This sequence belongs to the bacterial ribosomal protein bS20 family.

Its function is as follows. Binds directly to 16S ribosomal RNA. This is Small ribosomal subunit protein bS20 from Lysinibacillus sphaericus (strain C3-41).